Consider the following 401-residue polypeptide: MANGLKGIKTVRDFELAGKVVFLRLDLNVPMENGKITDENRITASLPTIKYCMEQGAKLVMASHLGRPKTKDDTEFSLEPVAKRLQDLLNAEVILVEEPDSDAPKHLLPSLKPHQLILLENVRFEEGETKDSVEFAQKIANYSDIYINDAFGASHRAHATIHALPSVMKDKGIGFLIEKEITMLDSLLQNPKRPYIAVMGGAKVSDKIAVIERLMDVVDGFIVGGAMAYTFLKAQGLPVGKSLVENDKLKYAKEMIERIEARNKTILLPVDHVATKGITDTAHAHVTNDVAIAEDELGVDIGPKSIKNFSAALREAGTIFWNGPMGIFENPAFAKGTFGVAQAIADSEAIKIVGGGDSAAAAEASGFAGKMTHISTGGGASLEYLQGDKLPGLEILRTRIR.

Residues 26–28 (DLN), Arg-41, 64–67 (HLGR), Arg-123, and Arg-156 each bind substrate. ATP-binding positions include Lys-207, Gly-298, Glu-329, and 355–358 (GGDS).

Belongs to the phosphoglycerate kinase family. In terms of assembly, monomer.

The protein localises to the cytoplasm. It carries out the reaction (2R)-3-phosphoglycerate + ATP = (2R)-3-phospho-glyceroyl phosphate + ADP. It functions in the pathway carbohydrate degradation; glycolysis; pyruvate from D-glyceraldehyde 3-phosphate: step 2/5. This is Phosphoglycerate kinase from Bdellovibrio bacteriovorus (strain ATCC 15356 / DSM 50701 / NCIMB 9529 / HD100).